Here is a 428-residue protein sequence, read N- to C-terminus: Histone-lysine N-methyltransferase SMYD3 (428 aa).

Met1 carries the post-translational modification N-acetylmethionine. The SET domain occupies Leu4–Leu240. Arg14–Asn16 serves as a coordination point for S-adenosyl-L-methionine. Thr22 carries the phosphothreonine modification. Zn(2+) is bound by residues Cys49, Cys52, Cys62, Cys65, Cys71, Cys75, His83, and Cys87. Residues Cys49 to Cys87 form an MYND-type zinc finger. S-adenosyl-L-methionine-binding positions include Tyr124, Asn132, Asn181, Asn205–His206, Tyr239, and Phe259. Residues Asp272–Ser428 form a C-terminal domain; essential for histone methyltransferase activity, nuclear localization and mediates interaction with HSP90AA1 region.

It belongs to the class V-like SAM-binding methyltransferase superfamily. Histone-lysine methyltransferase family. Interacts with HSPCA. Interacts with HELZ. Interacts with POLR2A; the interaction may be indirect and may be mediated by HELZ. Interacts with HSP90AA1; this interaction enhances SMYD3 histone-lysine N-methyltransferase. In terms of tissue distribution, expressed in skeletal muscles and testis. Overexpressed in a majority of colorectal and hepatocellular carcinomas.

The protein resides in the cytoplasm. Its subcellular location is the nucleus. The catalysed reaction is L-lysyl(4)-[histone H3] + 3 S-adenosyl-L-methionine = N(6),N(6),N(6)-trimethyl-L-lysyl(4)-[histone H3] + 3 S-adenosyl-L-homocysteine + 3 H(+). Its activity is regulated as follows. Histone methyltransferase activity strongly stimulated by HSPCA. Its function is as follows. Histone methyltransferase. Specifically methylates 'Lys-4' of histone H3, inducing di- and tri-methylation, but not monomethylation. Also methylates 'Lys-5' of histone H4. Plays an important role in transcriptional activation as a member of an RNA polymerase complex. Binds DNA containing 5'-CCCTCC-3' or 5'-GAGGGG-3' sequences. The polypeptide is Histone-lysine N-methyltransferase SMYD3 (SMYD3) (Homo sapiens (Human)).